The chain runs to 71 residues: Large ribosomal subunit protein uL29 (71 aa).

This sequence belongs to the universal ribosomal protein uL29 family.

The polypeptide is Large ribosomal subunit protein uL29 (Rickettsia akari (strain Hartford)).